The following is a 292-amino-acid chain: GTP cyclohydrolase FolE2 (292 aa).

Belongs to the GTP cyclohydrolase IV family.

The enzyme catalyses GTP + H2O = 7,8-dihydroneopterin 3'-triphosphate + formate + H(+). Its pathway is cofactor biosynthesis; 7,8-dihydroneopterin triphosphate biosynthesis; 7,8-dihydroneopterin triphosphate from GTP: step 1/1. Its function is as follows. Converts GTP to 7,8-dihydroneopterin triphosphate. The sequence is that of GTP cyclohydrolase FolE2 from Staphylococcus saprophyticus subsp. saprophyticus (strain ATCC 15305 / DSM 20229 / NCIMB 8711 / NCTC 7292 / S-41).